Consider the following 416-residue polypeptide: Enterobactin exporter EntS (416 aa).

The Cytoplasmic segment spans residues 1–21; sequence MNKQSWLLNLSLLKTHPAFRA. A helical membrane pass occupies residues 22-42; it reads VFLARFISIVSLGLLGVAVPV. Over 43–55 the chain is Periplasmic; the sequence is QIQIMTHSTWQVG. A helical membrane pass occupies residues 56-76; the sequence is LSVTLTGGAMFVGLMVGGVLA. Residues 77–83 are Cytoplasmic-facing; the sequence is DRYERKK. The chain crosses the membrane as a helical span at residues 84–104; sequence VILLARGTCGIGFIGLCLNAL. At 105–109 the chain is on the periplasmic side; that stretch reads LPEPS. The chain crosses the membrane as a helical span at residues 110–130; it reads LLAIYLLGLWDGFFASLGVTA. Residues 131 to 156 lie on the Cytoplasmic side of the membrane; that stretch reads LLAATPALVGRENLMQAGAITMLTVR. Residues 157-177 form a helical membrane-spanning segment; it reads LGSVISPMIGGLLLATGGVAW. A topological domain (periplasmic) is located at residue Asn-178. The helical transmembrane segment at 179-199 threads the bilayer; it reads YGLAAAGTFITLLPLLSLPAL. Topologically, residues 200 to 218 are cytoplasmic; that stretch reads PPPPQPREHPLKSLLAGFR. The helical transmembrane segment at 219-239 threads the bilayer; that stretch reads FLLASPLVGGIALLGGLLTMA. The Periplasmic portion of the chain corresponds to 240 to 256; that stretch reads SAVRVLYPALADNWQMS. Residues 257–277 traverse the membrane as a helical segment; sequence AAQIGFLYAAIPLGAAIGALT. The Cytoplasmic portion of the chain corresponds to 278 to 287; it reads SGKLAHSVRP. A helical transmembrane segment spans residues 288-307; the sequence is GLLMLLSTLGAFLAIGLFGL. Residues 308 to 313 lie on the Periplasmic side of the membrane; the sequence is MPMWIL. Residues 314-336 form a helical membrane-spanning segment; that stretch reads GVVCLALFGWLSAVSSLLQYTML. Residues 337–356 lie on the Cytoplasmic side of the membrane; the sequence is QTQTPEAMLGRINGLWTAQN. The helical transmembrane segment at 357–377 threads the bilayer; that stretch reads VTGDAIGAALLGGLGAMMTPV. A topological domain (periplasmic) is located at residue Ala-378. A helical membrane pass occupies residues 379 to 399; it reads SASASGFGLLIIGVLLLLVLV. The Cytoplasmic portion of the chain corresponds to 400–416; sequence ELRRFRQTPPQVTASDS.

This sequence belongs to the major facilitator superfamily. EntS (TC 2.A.1.38) family.

The protein resides in the cell inner membrane. Functionally, component of an export pathway for enterobactin. The protein is Enterobactin exporter EntS of Escherichia coli O127:H6 (strain E2348/69 / EPEC).